We begin with the raw amino-acid sequence, 481 residues long: Glutamate-1-semialdehyde 2,1-aminomutase, chloroplastic (481 aa).

Residues asparagine 18–alanine 40 are disordered. Lysine 321 bears the N6-(pyridoxal phosphate)lysine mark.

Belongs to the class-III pyridoxal-phosphate-dependent aminotransferase family. HemL subfamily. In terms of assembly, homodimer. Pyridoxal 5'-phosphate is required as a cofactor.

The protein localises to the plastid. The protein resides in the chloroplast. The catalysed reaction is (S)-4-amino-5-oxopentanoate = 5-aminolevulinate. It functions in the pathway porphyrin-containing compound metabolism; protoporphyrin-IX biosynthesis; 5-aminolevulinate from L-glutamyl-tRNA(Glu): step 2/2. Its pathway is porphyrin-containing compound metabolism; chlorophyll biosynthesis. The chain is Glutamate-1-semialdehyde 2,1-aminomutase, chloroplastic from Solanum lycopersicum (Tomato).